Reading from the N-terminus, the 716-residue chain is MAEEFITPVYCTGVSAQVQKQRAKELGLGRHENAIKYLGQDYEQLRVHCLQRGALFRDEAFPPVPQSLGFKELGPNSSKTYGIKWKRPTELFSNPQFIVDGATRTDICQGALGDCWLLAAIASLTLNDTLLHRVVPHGQSFQDGYAGIFHFQLWQFGEWVDVVVDDLLPTKDGKLVFVHSAQGNEFWSALLEKAYAKVNGSYEALSGGSTSEGFEDFTGGVTEWYELRKAPSDLYNIILKALERGSLLGCSIDISSILDMEAVTFKKLVKGHAYSVTGAKQVNYQGQMVNLIRMRNPWGEVEWTGAWSDGSSEWNGVDPYMREQLRVKMEDGEFWMSFRDFMREFTRLEICNLTPDALKSQRFRNWNTTLYEGTWRRGSTAGGCRNYPATFWVNPQFKIRLEETDDPDPDDYGGRESGCSFLLALMQKHRRRERRFGRDMETIGFAVYEVPPELMGQPAVHLKRDFFLSNASRARSEQFINLREVSTRFRLPPGEYVVVPSTFEPNKEGDFVLRFFSEKSAGTQELDDQVQANLPDEQVLSEEEIDENFKSLFRQLAGEDMEISVKELRTILNRIISKHKDLRTTGFSLESCRSMVNLMDRDGNGKLGLVEFNILWNRIRNYLSIFRKFDLDKSGSMSAYEMRMAIEFAGFKLNKKLYELIITRYSEPDLAVDFDNFVCCLVRLETMFRFFKTLDTDLDGVVTFDLFKWLQLTMFA.

The Calpain catalytic domain maps to 55-354 (LFRDEAFPPV…FTRLEICNLT (300 aa)). Residues Gln109 and Asp114 each coordinate Ca(2+). Residues Cys115, His272, and Asn296 contribute to the active site. Ca(2+) is bound by residues Asp318 and Glu323. Thr354 is subject to Phosphothreonine. Residues 355–528 (PDALKSQRFR…KSAGTQELDD (174 aa)) are domain III. The tract at residues 529–544 (QVQANLPDEQVLSEEE) is linker. 4 EF-hand domains span residues 543-578 (EEID…IISK), 587-620 (FSLE…NRIR), 617-652 (NRIR…AGFK), and 682-716 (VRLE…TMFA). A domain IV region spans residues 545 to 715 (IDENFKSLFR…LFKWLQLTMF (171 aa)). Residues Asp600, Asp602, Asn604, Lys606, Glu611, Asp630, Asp632, Ser634, Ser636, and Glu641 each contribute to the Ca(2+) site.

It belongs to the peptidase C2 family. Forms a heterodimer with a small (regulatory) subunit CAPNS1. The cofactor is Ca(2+). Post-translationally, undergoes calcium-induced successive autoproteolytic cleavages that generate a membrane-bound 78 kDa active form and an intracellular 75 kDa active form. Calpastatin reduces with high efficiency the transition from 78 kDa to 75 kDa calpain forms.

It is found in the cytoplasm. The protein localises to the cell membrane. The enzyme catalyses Broad endopeptidase specificity.. With respect to regulation, activated by micromolar concentrations of calcium and inhibited by calpastatin. Functionally, calcium-regulated non-lysosomal thiol-protease which catalyzes limited proteolysis of substrates involved in cytoskeletal remodeling and signal transduction. Proteolytically cleaves CTBP1. Cleaves and activates caspase-7 (CASP7). This Bos taurus (Bovine) protein is Calpain-1 catalytic subunit.